The sequence spans 443 residues: Maintenance of mitochondrial morphology protein 1 (443 aa).

Over 1–80 (MADLETSDLS…PSNTWSFTQG (80 aa)) the chain is Lumenal. A helical membrane pass occupies residues 81-101 (LIVGQLSVVFVIVIFIKFFVF). At 102–443 (AESSPALAKS…NGDKVEDGSN (342 aa)) the chain is on the cytoplasmic side. Disordered regions lie at residues 126–146 (KKDQSSSDDADPDDDSETTAS) and 304–358 (LSAH…NDGT). The span at 131–142 (SSDDADPDDDSE) shows a compositional bias: acidic residues. Positions 165–417 (SPESLDWFNV…EPRFQVVRLP (253 aa)) constitute an SMP-LTD domain.

This sequence belongs to the MMM1 family. In terms of assembly, homodimer. Component of the ER-mitochondria encounter structure (ERMES) or MDM complex, composed of MMM1, MDM10, MDM12 and MDM34. An MMM1 homodimer associates with one molecule of MDM12 on each side in a pairwise head-to-tail manner, and the SMP-LTD domains of MMM1 and MDM12 generate a continuous hydrophobic tunnel for phospholipid trafficking.

The protein localises to the endoplasmic reticulum membrane. Component of the ERMES/MDM complex, which serves as a molecular tether to connect the endoplasmic reticulum (ER) and mitochondria. Components of this complex are involved in the control of mitochondrial shape and protein biogenesis, and function in nonvesicular lipid trafficking between the ER and mitochondria. The MDM12-MMM1 subcomplex functions in the major beta-barrel assembly pathway that is responsible for biogenesis of all outer membrane beta-barrel proteins, and acts in a late step after the SAM complex. The MDM10-MDM12-MMM1 subcomplex further acts in the TOM40-specific pathway after the action of the MDM12-MMM1 complex. Essential for establishing and maintaining the structure of mitochondria and maintenance of mtDNA nucleoids. The protein is Maintenance of mitochondrial morphology protein 1 of Scheffersomyces stipitis (strain ATCC 58785 / CBS 6054 / NBRC 10063 / NRRL Y-11545) (Yeast).